The sequence spans 1705 residues: Rho guanine nucleotide exchange factor 28 (1705 aa).

Disordered regions lie at residues 287–316 (RPEE…SAAE) and 473–524 (KKRS…ETNT). Phosphoserine is present on residues serine 313 and serine 478. Residues 501–510 (PGSQSSSRTG) are compositionally biased toward polar residues. Serine 624 carries the post-translational modification Phosphoserine. A disordered region spans residues 630 to 649 (MTSPRNKSKTKSKDAKDKEK). The segment covering 640-649 (KSKDAKDKEK) has biased composition (basic and acidic residues). The Phorbol-ester/DAG-type zinc finger occupies 652-699 (RHQFAPGTFSGVLQCLVCDKTLLGKESLQCSNCNANVHKGCKDAAPAC). Polar residues-rich tracts occupy residues 710 to 721 (NKPQTILGNSSF) and 759 to 775 (VPGT…TSLE). Residues 710–800 (NKPQTILGNS…ELLQSMGSSP (91 aa)) form a disordered region. The span at 777-791 (ESDHNSCRSRSHSDE) shows a compositional bias: basic and acidic residues. The DH domain occupies 849 to 1044 (KRQDVIFELM…KDMIATVDLK (196 aa)). Residues 1086 to 1188 (TLLYDGLVYW…WMRRIQQAVE (103 aa)) form the PH domain. The interval 1187-1207 (VESCPEEKGGRTSESDEDKRK) is disordered. Positions 1191–1207 (PEEKGGRTSESDEDKRK) are enriched in basic and acidic residues. Residues 1295-1304 (AVSQSCEDSC) are interaction with PTK2/FAK1; required for regulation of axonal branching and synapse formation. A disordered region spans residues 1312–1339 (TLSSHDVPGSPTASLVTGGREGRGCSDV). Residues 1372 to 1383 (IIQAIQNLTRLL) form a mediates cytoplasmic retention and interaction with YWHAH region. The interval 1425 to 1705 (QKSRDADRQH…DGAKENIVYL (281 aa)) is interaction with microtubules. A coiled-coil region spans residues 1488–1525 (RSRGELDLQLQEYQHSLERLREGQRLVEREQARMRAQQ). Residues 1496-1527 (QLQEYQHSLERLREGQRLVEREQARMRAQQSL) form an RNA-binding region. Phosphoserine is present on serine 1538. The segment at 1566–1579 (FINEALVQMSFNTF) is mediates cytoplasmic retention and interaction with MAPK8IP1. Residues 1638-1705 (PFHESSKDSC…DGAKENIVYL (68 aa)) form a disordered region. A compositionally biased stretch (basic and acidic residues) spans 1641–1655 (ESSKDSCKNDLDTSH). The segment covering 1656–1669 (TESPTPHDSNSHRP) has biased composition (polar residues). A compositionally biased stretch (basic and acidic residues) spans 1688 to 1699 (TRQDGETGDGAK).

Homooligomer; forms cytoplasmic aggregates. Forms a complex with MAPK8 and MAPK8IP1. Interacts with RHOA. Interacts with microtubules. Interacts with YWHAE and YWHAH. Interacts with PTK2/FAK1. Interacts with NEFL. Interacts with CTNND2; prevents interaction with RHOA. Phosphorylated on tyrosine upon stimulation of cells by laminin.

The protein resides in the cytoplasm. The protein localises to the cell membrane. Its function is as follows. Functions as a RHOA-specific guanine nucleotide exchange factor regulating signaling pathways downstream of integrins and growth factor receptors. Functions in axonal branching, synapse formation and dendritic morphogenesis. Also functions in focal adhesion formation, cell motility and B-lymphocytes activation. May regulate NEFL expression and aggregation and play a role in apoptosis. The polypeptide is Rho guanine nucleotide exchange factor 28 (ARHGEF28) (Homo sapiens (Human)).